A 220-amino-acid polypeptide reads, in one-letter code: UPF0319 protein Ent638_1476 (220 aa).

A signal peptide spans 1 to 20; sequence MKTGIVSAVLALVMPVCVYA.

Belongs to the UPF0319 family.

This is UPF0319 protein Ent638_1476 from Enterobacter sp. (strain 638).